Here is a 583-residue protein sequence, read N- to C-terminus: Protein disulfide-isomerase-like protein of the testis (583 aa).

The first 17 residues, 1–17 (MDLLWMPLLLVAARISA), serve as a signal peptide directing secretion. 4 N-linked (GlcNAc...) asparagine glycosylation sites follow: asparagine 58, asparagine 128, asparagine 160, and asparagine 340. The Thioredoxin domain occupies 388 to 451 (LVKQLVGKNF…IAKIDITAND (64 aa)). Basic and acidic residues-rich tracts occupy residues 522–531 (EVPMMKKELP) and 540–559 (NVTK…KTSE). A disordered region spans residues 522–583 (EVPMMKKELP…KKKPKVKEEL (62 aa)). An N-linked (GlcNAc...) asparagine glycan is attached at asparagine 540. The span at 573–583 (QKKKPKVKEEL) shows a compositional bias: basic residues. The Prevents secretion from ER signature appears at 580-583 (KEEL).

It belongs to the protein disulfide isomerase family. Homodimer. The homodimer is not disulfide-linked. Interacts with ERO1A and CLGN. In terms of processing, N-glycosylated.

Its subcellular location is the endoplasmic reticulum. Functionally, probable redox-inactive chaperone involved in spermatogenesis. In Macaca fascicularis (Crab-eating macaque), this protein is Protein disulfide-isomerase-like protein of the testis (PDILT).